A 259-amino-acid polypeptide reads, in one-letter code: MTMYNIQDHVVIITGSSSGIGLAASTLALASGAKVLGIDISNSPASLTANPNYTFFAADLSHPESAKKAIAACIAAYGNRIDGLLNIAGVMDLNQSADTVTDDMWDRCIAINLTAPVKLMREVIPIMRLRGKGSIVNVGSKASMSGAVSGVAYTASKHGLVGATKNVAWRFKHEGIRCNIVCPGGVAATGIRDGVDSTQFDSEAMEMMTVIHQAHASDHAKGLGLQPEDLAHSLLYFLSDLSKGISGAVIPVDNAWSTI.

I13, D59, R121, Y153, K157, and V186 together coordinate NADP(+). Y153 acts as the Proton acceptor in catalysis. Residue Y153 is the Proton donor of the active site. The Lowers pKa of active site Tyr role is filled by K157.

This sequence belongs to the short-chain dehydrogenases/reductases (SDR) family.

It functions in the pathway secondary metabolite biosynthesis; terpenoid biosynthesis. Short chain dehydrogenase; part of the gene cluster A that mediates the biosynthesis of the fungal meroterpenoid acetoxydehydroaustin. The first step of the pathway is the synthesis of 3,5-dimethylorsellinic acid by the polyketide synthase ausA. 3,5-dimethylorsellinic acid is then prenylated by the polyprenyl transferase ausN. Further epoxidation by the FAD-dependent monooxygenase ausM and cyclization by the probable terpene cyclase ausL lead to the formation of protoaustinoid A. Protoaustinoid A is then oxidized to spiro-lactone preaustinoid A3 by the combined action of the FAD-binding monooxygenases ausB and ausC, and the dioxygenase ausE. Acid-catalyzed keto-rearrangement and ring contraction of the tetraketide portion of preaustinoid A3 by ausJ lead to the formation of preaustinoid A4. The aldo-keto reductase ausK, with the help of ausH, is involved in the next step by transforming preaustinoid A4 into isoaustinone which is in turn hydroxylated by the P450 monooxygenase ausI to form austinolide. The cytochrome P450 monooxygenase ausG then modifies austinolide to austinol. Austinol is further acetylated to austin by the O-acetyltransferase ausP, which spontaneously changes to dehydroaustin. The cytochrome P450 monooxygenase then converts dehydroaustin is into 7-dehydrodehydroaustin. The hydroxylation catalyzed by ausR permits the second O-acetyltransferase ausQ to add an additional acetyl group to the molecule, leading to the formation of acetoxydehydroaustin. Due to genetic rearrangements of the clusters and the subsequent loss of some enzymes, the end product of the Penicillium brasilianum austinoid biosynthesis clusters is acetoxydehydroaustin. The protein is Short chain dehydrogenase ausX of Penicillium brasilianum.